A 316-amino-acid polypeptide reads, in one-letter code: HPr kinase/phosphorylase (316 aa).

Active-site residues include histidine 143 and lysine 164. Residue 158–165 coordinates ATP; sequence GEAGSGKS. Residue serine 165 participates in Mg(2+) binding. Catalysis depends on aspartate 182, which acts as the Proton acceptor; for phosphorylation activity. Proton donor; for dephosphorylation activity. Residues 206–215 are important for the catalytic mechanism of both phosphorylation and dephosphorylation; that stretch reads LEVRGLGVLN. Residue glutamate 207 coordinates Mg(2+). Arginine 251 is a catalytic residue. The segment at 272 to 277 is important for the catalytic mechanism of dephosphorylation; that stretch reads PVMPGR.

The protein belongs to the HPrK/P family. As to quaternary structure, homohexamer. The cofactor is Mg(2+).

The catalysed reaction is [HPr protein]-L-serine + ATP = [HPr protein]-O-phospho-L-serine + ADP + H(+). It catalyses the reaction [HPr protein]-O-phospho-L-serine + phosphate + H(+) = [HPr protein]-L-serine + diphosphate. In terms of biological role, catalyzes the ATP- as well as the pyrophosphate-dependent phosphorylation of a specific serine residue in HPr, a phosphocarrier protein of the phosphoenolpyruvate-dependent sugar phosphotransferase system (PTS). HprK/P also catalyzes the pyrophosphate-producing, inorganic phosphate-dependent dephosphorylation (phosphorolysis) of seryl-phosphorylated HPr (P-Ser-HPr). In Stenotrophomonas maltophilia (strain K279a), this protein is HPr kinase/phosphorylase.